We begin with the raw amino-acid sequence, 124 residues long: MGTSSVLLMIASSLILLEVVMTSSTEVSKSKELENLVEVLRCFKDLKESGQRTYVTYIGSQMRLFDDRGREVSCDAEKQQEIRQRSDRRCIFSPIHCLFDRRLQTAKLLRSGTTKRLFGERRRR.

The signal sequence occupies residues 1 to 22; sequence MGTSSVLLMIASSLILLEVVMT.

This is an uncharacterized protein from Caenorhabditis elegans.